The following is a 249-amino-acid chain: Triosephosphate isomerase (249 aa).

9 to 11 (NWK) is a substrate binding site. The active-site Electrophile is the H95. The active-site Proton acceptor is E166. Substrate is bound by residues G172, S211, and 232-233 (GG).

It belongs to the triosephosphate isomerase family. As to quaternary structure, homodimer.

The protein localises to the cytoplasm. It carries out the reaction D-glyceraldehyde 3-phosphate = dihydroxyacetone phosphate. It functions in the pathway carbohydrate biosynthesis; gluconeogenesis. It participates in carbohydrate degradation; glycolysis; D-glyceraldehyde 3-phosphate from glycerone phosphate: step 1/1. Functionally, involved in the gluconeogenesis. Catalyzes stereospecifically the conversion of dihydroxyacetone phosphate (DHAP) to D-glyceraldehyde-3-phosphate (G3P). The chain is Triosephosphate isomerase from Legionella pneumophila subsp. pneumophila (strain Philadelphia 1 / ATCC 33152 / DSM 7513).